A 452-amino-acid chain; its full sequence is Keratin, type I cytoskeletal 42 (452 aa).

The segment at 4 to 93 is head; that stretch reads TTSVRQFSTS…GVSDALLGGS (90 aa). The coil 1A stretch occupies residues 94 to 129; that stretch reads EKETMQNLNDRLATYLDRVRALEEANADLEVKIREW. Residues 94-405 enclose the IF rod domain; sequence EKETMQNLND…RLLEGEDAHL (312 aa). A linker 1 region spans residues 130–147; sequence YKKQGPGPARDYSPYFKT. The coil 1B stretch occupies residues 148–239; sequence IEDLRNKILA…KNHEEEMNAL (92 aa). The tract at residues 240-262 is linker 12; it reads RGQVGGDVNVEMDAAPGVDLSRI. A coil 2 region spans residues 263-401; the sequence is LNEMRDQYEK…ATYRRLLEGE (139 aa). The tract at residues 402-452 is tail; sequence DAHLATQYSSSLASQPSREGMVTSRQVRTIVEEVQDGKVVSSREQVHRSTH.

The protein belongs to the intermediate filament family. Heterodimer of a type I and a type II keratin. Colocalizes with KRT8/KRT18 filament network. In terms of tissue distribution, expressed in nail matrix and nail bed epithelium (at protein level). Also expressed in tongue and digits with weak expression in vibrissae and in both filiform and fungiform papillae of oral mucosa.

The protein localises to the cytoplasm. The chain is Keratin, type I cytoskeletal 42 from Mus musculus (Mouse).